The following is a 314-amino-acid chain: Mitochondrial 2-oxoglutarate/malate carrier protein (314 aa).

A2 carries the N-acetylalanine modification. S6 carries the post-translational modification Phosphoserine. 3 Solcar repeats span residues 23–108 (VKFL…LFER), 117–208 (PGFL…SKQF), and 217–306 (DNIL…MNKA). Residues 24 to 42 (KFLFGGLAGMGATVFVQPL) form a helical membrane-spanning segment. K57 carries the post-translational modification N6-succinyllysine. At K73 the chain carries N6-acetyllysine. Residues 83–101 (GLSAGLLRQATYTTTRLGI) form a helical membrane-spanning segment. Phosphotyrosine is present on Y102. A run of 3 helical transmembrane segments spans residues 119-140 (FLLK…GTPA), 183-202 (GCIP…LASY), and 222-240 (HFCA…SMPV). K256 is subject to N6-acetyllysine. Residues 281–300 (GFTPYYARLGPHTVLTFIFL) form a helical membrane-spanning segment.

This sequence belongs to the mitochondrial carrier (TC 2.A.29) family. Interacts with SMIM26.

Its subcellular location is the mitochondrion inner membrane. It catalyses the reaction (S)-malate(in) + 2-oxoglutarate(out) = (S)-malate(out) + 2-oxoglutarate(in). The enzyme catalyses malonate(in) + 2-oxoglutarate(out) = malonate(out) + 2-oxoglutarate(in). The catalysed reaction is succinate(in) + 2-oxoglutarate(out) = succinate(out) + 2-oxoglutarate(in). It carries out the reaction maleate(in) + 2-oxoglutarate(out) = maleate(out) + 2-oxoglutarate(in). It catalyses the reaction oxaloacetate(in) + 2-oxoglutarate(out) = oxaloacetate(out) + 2-oxoglutarate(in). Catalyzes the transport of 2-oxoglutarate (alpha-oxoglutarate) across the inner mitochondrial membrane in an electroneutral exchange for malate. Can also exchange 2-oxoglutarate for other dicarboxylic acids such as malonate, succinate, maleate and oxaloacetate, although with lower affinity. Contributes to several metabolic processes, including the malate-aspartate shuttle, the oxoglutarate/isocitrate shuttle, in gluconeogenesis from lactate, and in nitrogen metabolism. Maintains mitochondrial fusion and fission events, and the organization and morphology of cristae. Involved in the regulation of apoptosis. Helps protect from cytotoxic-induced apoptosis by modulating glutathione levels in mitochondria. This Mus musculus (Mouse) protein is Mitochondrial 2-oxoglutarate/malate carrier protein (Slc25a11).